Reading from the N-terminus, the 1425-residue chain is Zinc finger FYVE domain-containing protein 9 (1425 aa).

Disordered stretches follow at residues 201–255 and 291–352; these read ESTE…IGRD and EDLT…SGRN. The segment covering 202 to 225 has biased composition (basic and acidic residues); sequence STEKDMNSEKQMDPLNRPKTEGRS. Composition is skewed to polar residues over residues 230–245 and 296–312; these read CPTS…SPSQ and KISS…SFSH. Residues Ser-306 and Ser-668 each carry the phosphoserine modification. The FYVE-type zinc-finger motif lies at 699–758; the sequence is DSQAPNCMKCEARFTFTKRRHHCRACGKVFCASCCSLKCKLLYMDRKEARVCVICHSVLM. Positions 705, 708, 721, 724, 729, 732, 750, and 753 each coordinate Zn(2+). The interval 767–823 is SBD; sequence MSASSQSPNPNNPAEYCSTIPPLQQAQASGALSSPPPTVMVPVGVLKHPGAEVAQPR.

Interacts (via the SBD region) with SMAD2; the interaction recruits SMAD2 to the TGF-beta receptor and is disrupted by phosphorylation of SMAD2 upon TGF-beta receptor activation. Interacts with SMAD3. Interacts with TGFBR1 and TGFBR2; the interaction recruits SMAD2 to the TGF-beta receptor. Interacts with PML. Ubiquitous. In the brain found primarily in the cerebrovascular smooth muscle cells and reactive astrocytes.

It localises to the cytoplasm. Its subcellular location is the early endosome membrane. In terms of biological role, early endosomal protein that functions to recruit SMAD2/SMAD3 to intracellular membranes and to the TGF-beta receptor. Plays a significant role in TGF-mediated signaling by regulating the subcellular location of SMAD2 and SMAD3 and modulating the transcriptional activity of the SMAD3/SMAD4 complex. Possibly associated with TGF-beta receptor internalization. The sequence is that of Zinc finger FYVE domain-containing protein 9 (ZFYVE9) from Homo sapiens (Human).